The following is a 449-amino-acid chain: Probable phosphoglucosamine mutase (449 aa).

S101 functions as the Phosphoserine intermediate in the catalytic mechanism. S101, D239, D241, and D243 together coordinate Mg(2+). Phosphoserine is present on S101.

Belongs to the phosphohexose mutase family. Requires Mg(2+) as cofactor. In terms of processing, activated by phosphorylation.

The enzyme catalyses alpha-D-glucosamine 1-phosphate = D-glucosamine 6-phosphate. Functionally, catalyzes the conversion of glucosamine-6-phosphate to glucosamine-1-phosphate. This Methanothermobacter thermautotrophicus (strain ATCC 29096 / DSM 1053 / JCM 10044 / NBRC 100330 / Delta H) (Methanobacterium thermoautotrophicum) protein is Probable phosphoglucosamine mutase.